The following is a 183-amino-acid chain: Glutathione-regulated potassium-efflux system ancillary protein KefG (183 aa).

Belongs to the NAD(P)H dehydrogenase (quinone) family. KefG subfamily. As to quaternary structure, interacts with KefB.

It is found in the cell inner membrane. The enzyme catalyses a quinone + NADH + H(+) = a quinol + NAD(+). It carries out the reaction a quinone + NADPH + H(+) = a quinol + NADP(+). Its function is as follows. Regulatory subunit of a potassium efflux system that confers protection against electrophiles. Required for full activity of KefB. This is Glutathione-regulated potassium-efflux system ancillary protein KefG from Salmonella paratyphi C (strain RKS4594).